The following is a 224-amino-acid chain: uncharacterized protein (224 aa).

The region spanning 9-68 (SKMVDVNEITKYLPGFNCGACGYKRCDLFAEALLNKDVKLEDCPFLLRERFKENYEKLKE) is the 4Fe-4S domain. The [4Fe-4S] cluster site is built by cysteine 26, cysteine 29, cysteine 34, and cysteine 51.

Requires [4Fe-4S] cluster as cofactor.

This is an uncharacterized protein from Methanocaldococcus jannaschii (strain ATCC 43067 / DSM 2661 / JAL-1 / JCM 10045 / NBRC 100440) (Methanococcus jannaschii).